A 525-amino-acid chain; its full sequence is GMP synthase [glutamine-hydrolyzing] (525 aa).

A Glutamine amidotransferase type-1 domain is found at 9–207 (RILILDFGSQ…VLDICACEAL (199 aa)). C86 acts as the Nucleophile in catalysis. Active-site residues include H181 and E183. Positions 208 to 400 (WTPATIIEDA…LGLPYDMLYR (193 aa)) constitute a GMPS ATP-PPase domain. ATP is bound at residue 235 to 241 (SGGVDSS).

As to quaternary structure, homodimer.

The catalysed reaction is XMP + L-glutamine + ATP + H2O = GMP + L-glutamate + AMP + diphosphate + 2 H(+). The protein operates within purine metabolism; GMP biosynthesis; GMP from XMP (L-Gln route): step 1/1. Functionally, catalyzes the synthesis of GMP from XMP. The protein is GMP synthase [glutamine-hydrolyzing] of Yersinia enterocolitica serotype O:8 / biotype 1B (strain NCTC 13174 / 8081).